The sequence spans 208 residues: Protein JLP2 (208 aa).

Residues 185 to 194 (AKKNQKKKNK) are compositionally biased toward basic residues. The segment at 185–208 (AKKNQKKKNKQSKDEVTDDMQLEV) is disordered.

It belongs to the CCDC25 family.

Its subcellular location is the cytoplasm. This chain is Protein JLP2 (JLP2), found in Saccharomyces cerevisiae (strain ATCC 204508 / S288c) (Baker's yeast).